Here is a 260-residue protein sequence, read N- to C-terminus: 14-3-3 protein 3 (260 aa).

Belongs to the 14-3-3 family. In terms of assembly, homodimer.

The protein is 14-3-3 protein 3 (TFT3) of Solanum lycopersicum (Tomato).